Here is a 343-residue protein sequence, read N- to C-terminus: Fructose-1,6-bisphosphatase class 1 (343 aa).

The Mg(2+) site is built by Glu-90, Asp-109, Leu-111, and Asp-112. Substrate-binding positions include 112–115 (DGSS) and Asn-199. Glu-271 is a Mg(2+) binding site.

It belongs to the FBPase class 1 family. In terms of assembly, homotetramer. The cofactor is Mg(2+).

Its subcellular location is the cytoplasm. The catalysed reaction is beta-D-fructose 1,6-bisphosphate + H2O = beta-D-fructose 6-phosphate + phosphate. The protein operates within carbohydrate biosynthesis; Calvin cycle. In Rhodopseudomonas palustris (strain ATCC BAA-98 / CGA009), this protein is Fructose-1,6-bisphosphatase class 1.